Here is a 445-residue protein sequence, read N- to C-terminus: DNA primase DnaG (445 aa).

The Toprim domain occupies 166-252 (DAIVVVEGRS…SVEDLSRSEV (87 aa)). Mg(2+)-binding residues include Glu172, Asp214, and Asp216. Positions 276-355 (EEMSQAGEST…NGDGPTIPSL (80 aa)) are disordered. The span at 284–298 (STTADGGAVAAATSD) shows a compositional bias: low complexity. Polar residues predominate over residues 303–313 (NQPSPSSQTGS). The segment covering 324-337 (SVVDNSNATAVADA) has biased composition (low complexity).

It belongs to the archaeal DnaG primase family. As to quaternary structure, forms a ternary complex with MCM helicase and DNA. The cofactor is Mg(2+).

It catalyses the reaction ssDNA + n NTP = ssDNA/pppN(pN)n-1 hybrid + (n-1) diphosphate.. RNA polymerase that catalyzes the synthesis of short RNA molecules used as primers for DNA polymerase during DNA replication. The protein is DNA primase DnaG of Haloarcula marismortui (strain ATCC 43049 / DSM 3752 / JCM 8966 / VKM B-1809) (Halobacterium marismortui).